Consider the following 83-residue polypeptide: NAD(P)H-quinone oxidoreductase subunit L (83 aa).

A run of 2 helical transmembrane segments spans residues 18-38 and 53-73; these read ILAY…ALFF and LLVY…APFL.

Belongs to the complex I NdhL subunit family. NDH-1 can be composed of about 15 different subunits; different subcomplexes with different compositions have been identified which probably have different functions.

It localises to the cellular thylakoid membrane. The catalysed reaction is a plastoquinone + NADH + (n+1) H(+)(in) = a plastoquinol + NAD(+) + n H(+)(out). It carries out the reaction a plastoquinone + NADPH + (n+1) H(+)(in) = a plastoquinol + NADP(+) + n H(+)(out). NDH-1 shuttles electrons from an unknown electron donor, via FMN and iron-sulfur (Fe-S) centers, to quinones in the respiratory and/or the photosynthetic chain. The immediate electron acceptor for the enzyme in this species is believed to be plastoquinone. Couples the redox reaction to proton translocation, and thus conserves the redox energy in a proton gradient. Cyanobacterial NDH-1 also plays a role in inorganic carbon-concentration. The sequence is that of NAD(P)H-quinone oxidoreductase subunit L from Parasynechococcus marenigrum (strain WH8102).